The sequence spans 513 residues: ATP synthase subunit alpha (513 aa).

ATP is bound at residue 169–176; the sequence is GDRQTGKT.

It belongs to the ATPase alpha/beta chains family. In terms of assembly, F-type ATPases have 2 components, CF(1) - the catalytic core - and CF(0) - the membrane proton channel. CF(1) has five subunits: alpha(3), beta(3), gamma(1), delta(1), epsilon(1). CF(0) has three main subunits: a(1), b(2) and c(9-12). The alpha and beta chains form an alternating ring which encloses part of the gamma chain. CF(1) is attached to CF(0) by a central stalk formed by the gamma and epsilon chains, while a peripheral stalk is formed by the delta and b chains.

It localises to the cell inner membrane. It carries out the reaction ATP + H2O + 4 H(+)(in) = ADP + phosphate + 5 H(+)(out). Produces ATP from ADP in the presence of a proton gradient across the membrane. The alpha chain is a regulatory subunit. This Ralstonia pickettii (strain 12J) protein is ATP synthase subunit alpha.